The primary structure comprises 93 residues: Sm-like protein LSM2 (93 aa).

One can recognise a Sm domain in the interval 2–76; it reads LFFSYFKDLV…VRYVQLPKDG (75 aa).

Belongs to the snRNP Sm proteins family. As to quaternary structure, component of the heptameric LSM1-LSM7 complex that forms a seven-membered ring structure with a donut shape. The LSM subunits are arranged in the order LSM1, LSM2, LSM3, LSM6, LSM5, LSM7 and LSM4. LSM2 subunit interacts only with its two neighboring subunits, LSM1A or LSM1B and LSM3A or LSM3B. Component of the heptameric LSM2-LSM8 complex that forms a seven-membered ring structure with a donut shape. The LSM subunits are arranged in the order LSM8, LSM2, LSM3, LSM6, LSM5, LSM7 and LSM4. LSM2 subunit interacts only with its two neighboring subunits, LSM8 and LSM3A or LSM3B. Expressed in roots, leaves, stems, flowers and siliques.

It is found in the cytoplasm. Its subcellular location is the nucleus. In terms of biological role, component of LSM protein complexes, which are involved in RNA processing. Component of the cytoplasmic LSM1-LSM7 complex which is involved in mRNA degradation by promoting decapping and leading to accurate 5'-3' mRNA decay. The cytoplasmic LSM1-LSM7 complex regulates developmental gene expression by the decapping of specific development-related transcripts. Component of the nuclear LSM2-LSM8 complex which is involved splicing nuclear mRNAs. LSM2-LSM8 binds directly to the U6 small nuclear RNAs (snRNAs) and is essential for accurate splicing of selected development-related mRNAs through the stabilization of the spliceosomal U6 snRNA. Plays a critical role in the regulation of development-related gene expression. This Arabidopsis thaliana (Mouse-ear cress) protein is Sm-like protein LSM2.